Here is a 576-residue protein sequence, read N- to C-terminus: 5'-nucleotidase (576 aa).

Residues Met-1–Ser-28 form the signal peptide. Zn(2+) contacts are provided by Asp-38 and His-40. Cys-53 and Cys-59 are oxidised to a cystine. Asn-55 carries an N-linked (GlcNAc...) asparagine glycan. The Zn(2+) site is built by Asp-87, Asn-119, His-222, and His-245. N-linked (GlcNAc...) asparagine glycosylation is found at Asn-313, Asn-335, and Asn-349. 2 disulfides stabilise this stretch: Cys-355-Cys-360 and Cys-367-Cys-389. Residue Arg-356 coordinates AMP. Position 356 (Arg-356) interacts with IMP. AMP contacts are provided by Asn-392 and Arg-397. 2 residues coordinate IMP: Asn-392 and Arg-397. Asn-405 carries an N-linked (GlcNAc...) asparagine glycan. AMP is bound at residue Phe-419. Residue Phe-419 participates in IMP binding. Cysteines 478 and 481 form a disulfide. AMP-binding residues include Tyr-502 and Asp-508. IMP-binding residues include Tyr-502 and Asp-508. Residue Ser-551 is the site of GPI-anchor amidated serine attachment. The propeptide at Ala-552–Gln-576 is removed in mature form.

This sequence belongs to the 5'-nucleotidase family. Homodimer. Zn(2+) serves as cofactor. Expressed in the brain.

The protein resides in the cell membrane. It catalyses the reaction a ribonucleoside 5'-phosphate + H2O = a ribonucleoside + phosphate. The enzyme catalyses a 2'-deoxyribonucleoside 5'-phosphate + H2O = a 2'-deoxyribonucleoside + phosphate. The catalysed reaction is dTMP + H2O = thymidine + phosphate. It carries out the reaction CMP + H2O = cytidine + phosphate. It catalyses the reaction IMP + H2O = inosine + phosphate. The enzyme catalyses AMP + H2O = adenosine + phosphate. The catalysed reaction is GMP + H2O = guanosine + phosphate. It carries out the reaction UMP + H2O = uridine + phosphate. It catalyses the reaction dAMP + H2O = 2'-deoxyadenosine + phosphate. The enzyme catalyses dCMP + H2O = 2'-deoxycytidine + phosphate. In terms of biological role, catalyzes the hydrolysis of nucleotide monophosphates, releasing inorganic phosphate and the corresponding nucleoside. AMP is the preferred substrate but can also hydrolyze CMP and GMP. Shows a preference for ribonucleotide monophosphates over their equivalent deoxyribose forms. Other substrates include IMP, UMP, dAMP, dCMP, dTMP, NAD and NMN. The polypeptide is 5'-nucleotidase (Nt5e) (Rattus norvegicus (Rat)).